Here is an 851-residue protein sequence, read N- to C-terminus: Periplasmic nitrate reductase (851 aa).

The segment at residues Met1–Ala29 is a signal peptide (tat-type signal). In terms of domain architecture, 4Fe-4S Mo/W bis-MGD-type spans Val44–Asp100. 4 residues coordinate [4Fe-4S] cluster: Cys51, Cys54, Cys58, and Cys86. Residues Lys88, Gln155, Asn180, Cys184, Trp217–Met224, Ser248–His252, and Gln267–Asp269 each bind Mo-bis(molybdopterin guanine dinucleotide). The tract at residues Asp317–Thr338 is disordered. Mo-bis(molybdopterin guanine dinucleotide)-binding positions include Met388, Gln392, Asn498, Ser524–Asp525, Lys547, Asp574, and Thr741–Thr750. Residue Phe817 participates in substrate binding. Mo-bis(molybdopterin guanine dinucleotide) is bound by residues Asn825 and Lys842.

Belongs to the prokaryotic molybdopterin-containing oxidoreductase family. NasA/NapA/NarB subfamily. In terms of assembly, component of the periplasmic nitrate reductase NapAB complex composed of NapA and NapB. [4Fe-4S] cluster is required as a cofactor. Requires Mo-bis(molybdopterin guanine dinucleotide) as cofactor. Post-translationally, predicted to be exported by the Tat system. The position of the signal peptide cleavage has not been experimentally proven.

The protein resides in the periplasm. It carries out the reaction 2 Fe(II)-[cytochrome] + nitrate + 2 H(+) = 2 Fe(III)-[cytochrome] + nitrite + H2O. Functionally, catalytic subunit of the periplasmic nitrate reductase complex NapAB. Receives electrons from NapB and catalyzes the reduction of nitrate to nitrite. The protein is Periplasmic nitrate reductase of Leptothrix cholodnii (strain ATCC 51168 / LMG 8142 / SP-6) (Leptothrix discophora (strain SP-6)).